Reading from the N-terminus, the 72-residue chain is SRY-related protein ADW5 (72 aa).

The segment at residues 1–69 is a DNA-binding region (HMG box); the sequence is VKRPMNAFMV…KHMADYPDYK (69 aa).

Its subcellular location is the nucleus. The sequence is that of SRY-related protein ADW5 from Alligator mississippiensis (American alligator).